A 528-amino-acid polypeptide reads, in one-letter code: Cytochrome P450 monooxygenase vrcB (528 aa).

Residues 5-27 (YGLFFAAVALYSVALVIYRLYLH) form a helical membrane-spanning segment. Position 470 (Cys-470) interacts with heme.

This sequence belongs to the cytochrome P450 family. Heme serves as cofactor.

It localises to the membrane. It carries out the reaction variecoladiene + 4 reduced [NADPH--hemoprotein reductase] + 4 O2 = variecolin + 4 oxidized [NADPH--hemoprotein reductase] + 6 H2O + 4 H(+). The protein operates within secondary metabolite biosynthesis; terpenoid biosynthesis. Functionally, cytochrome P450 monooxygenase; part of the gene cluster that mediates the biosynthesis of the sesterterpene variecolin. The first step in the pathway is performed by the variecoladiene synthase vrcA that possesses both prenyl transferase and terpene cyclase activity, converting isopentenyl diphosphate and dimethylallyl diphosphate into geranylfarnesyl pyrophosphate (GFPP) and then converting GFPP into the tetracyclic variecoladiene. The cytochrome P450 monooxygenase vrcB then catalyzes multiple oxidations at C-5 and C-20 positions to yield variecolin. This is Cytochrome P450 monooxygenase vrcB from Aspergillus aculeatus (strain ATCC 16872 / CBS 172.66 / WB 5094).